The following is a 326-amino-acid chain: Glycine N(alpha)-acyltransferase (326 aa).

It belongs to the acetyltransferase family.

It catalyses the reaction a (3R)-hydroxyacyl-[ACP] + glycine = a lyso-glycine lipid + holo-[ACP] + H(+). It carries out the reaction (3R)-hydroxyhexadecanoyl-[ACP] + glycine = N-[(3R)-3-hydroxyhexadecanoyl]-glycine + holo-[ACP] + H(+). Its pathway is lipid metabolism. Functionally, is involved in the production of glycine lipids (GL), which are phosphorus-free membrane lipids. Catalyzes the first step of GL biosynthesis, i.e. the N-acylation of glycine via addition of a 3-hydroxy fatty acyl group, to form a range of monoacylated glycine (also named lyso-glycine lipids or lyso-GL). As an example, catalyzes the production of commendamide, an N-acylated (3-OH C16:0) derivative of glycine with hemolytic activity and the ability to solubilize cholesterol micelles; this compound can also activate NF-kB through the G-protein coupled receptor GPCR G2A/132. This Phocaeicola vulgatus (strain ATCC 8482 / DSM 1447 / JCM 5826 / CCUG 4940 / NBRC 14291 / NCTC 11154) (Bacteroides vulgatus) protein is Glycine N(alpha)-acyltransferase.